We begin with the raw amino-acid sequence, 90 residues long: Defensin-like protein 293 (90 aa).

A signal peptide spans 1 to 26 (MTSRAKSLFIFFFLISCTFMLLETDA). 3 cysteine pairs are disulfide-bonded: Cys-63/Cys-83, Cys-69/Cys-88, and Cys-75/Cys-90.

The protein belongs to the DEFL family.

It is found in the secreted. This Arabidopsis thaliana (Mouse-ear cress) protein is Defensin-like protein 293.